Consider the following 402-residue polypeptide: Probable tRNA sulfurtransferase (402 aa).

In terms of domain architecture, THUMP spans 61-166 (EEIMKRISKV…SDAAYLYSRV (106 aa)). Residues 184 to 185 (ML), 209 to 210 (HF), Arg266, Gly288, and Gln297 contribute to the ATP site.

Belongs to the ThiI family.

The protein localises to the cytoplasm. The enzyme catalyses [ThiI sulfur-carrier protein]-S-sulfanyl-L-cysteine + a uridine in tRNA + 2 reduced [2Fe-2S]-[ferredoxin] + ATP + H(+) = [ThiI sulfur-carrier protein]-L-cysteine + a 4-thiouridine in tRNA + 2 oxidized [2Fe-2S]-[ferredoxin] + AMP + diphosphate. It carries out the reaction [ThiS sulfur-carrier protein]-C-terminal Gly-Gly-AMP + S-sulfanyl-L-cysteinyl-[cysteine desulfurase] + AH2 = [ThiS sulfur-carrier protein]-C-terminal-Gly-aminoethanethioate + L-cysteinyl-[cysteine desulfurase] + A + AMP + 2 H(+). It participates in cofactor biosynthesis; thiamine diphosphate biosynthesis. Catalyzes the ATP-dependent transfer of a sulfur to tRNA to produce 4-thiouridine in position 8 of tRNAs, which functions as a near-UV photosensor. Also catalyzes the transfer of sulfur to the sulfur carrier protein ThiS, forming ThiS-thiocarboxylate. This is a step in the synthesis of thiazole, in the thiamine biosynthesis pathway. The sulfur is donated as persulfide by IscS. The sequence is that of Probable tRNA sulfurtransferase from Macrococcus caseolyticus (strain JCSC5402) (Macrococcoides caseolyticum).